The following is a 469-amino-acid chain: ATP-dependent protease ATPase subunit HslU (469 aa).

Residues I21, 63 to 68, D282, E347, and R419 contribute to the ATP site; that span reads GVGKTE.

The protein belongs to the ClpX chaperone family. HslU subfamily. A double ring-shaped homohexamer of HslV is capped on each side by a ring-shaped HslU homohexamer. The assembly of the HslU/HslV complex is dependent on binding of ATP.

It localises to the cytoplasm. Its function is as follows. ATPase subunit of a proteasome-like degradation complex; this subunit has chaperone activity. The binding of ATP and its subsequent hydrolysis by HslU are essential for unfolding of protein substrates subsequently hydrolyzed by HslV. HslU recognizes the N-terminal part of its protein substrates and unfolds these before they are guided to HslV for hydrolysis. The polypeptide is ATP-dependent protease ATPase subunit HslU (Petrotoga mobilis (strain DSM 10674 / SJ95)).